A 245-amino-acid chain; its full sequence is Homeobox protein Hox-A4a (245 aa).

The segment at 34-99 (DYYERPKDPG…HGPRLTTESC (66 aa)) is disordered. The segment covering 35–51 (YYERPKDPGFPHHEEAS) has biased composition (basic and acidic residues). Composition is skewed to polar residues over residues 53-73 (PRSN…NDLN) and 82-99 (QPQS…TESC). An Antp-type hexapeptide motif is present at residues 126–131 (VYPWMK). Residues 147-206 (PKRSRTAYTRQQALELEKEFHFNRYLTRRRRVEIAHTMCLSERQVKIWFQNRRMKWKKDH) constitute a DNA-binding region (homeobox). A disordered region spans residues 205–245 (DHKLPNTKIRSSSSAPSNHHVKTDATQQQQTLLPTPCSSNL). Over residues 212–221 (KIRSSSSAPS) the composition is skewed to polar residues. Residues 230–245 (TQQQQTLLPTPCSSNL) are compositionally biased toward low complexity.

Belongs to the Antp homeobox family. Deformed subfamily.

It is found in the nucleus. Sequence-specific transcription factor which is part of a developmental regulatory system that provides cells with specific positional identities on the anterior-posterior axis. In Danio rerio (Zebrafish), this protein is Homeobox protein Hox-A4a (hoxa4a).